The following is a 237-amino-acid chain: Large ribosomal subunit protein uL1 (237 aa).

Belongs to the universal ribosomal protein uL1 family. As to quaternary structure, part of the 50S ribosomal subunit.

Binds directly to 23S rRNA. The L1 stalk is quite mobile in the ribosome, and is involved in E site tRNA release. Its function is as follows. Protein L1 is also a translational repressor protein, it controls the translation of the L11 operon by binding to its mRNA. This chain is Large ribosomal subunit protein uL1, found in Rickettsia typhi (strain ATCC VR-144 / Wilmington).